A 197-amino-acid polypeptide reads, in one-letter code: MEQESLNGRYGSRVMTDEQMETLRKQIAIYAVLCDQLVFLHNSLSSVPLLSSGMNPMRGEYFDPMVASSSAHGMSTRPRWTPTTTQLQILENIYKEGSGTPNPRRIKEITMELSEHGQIMEKNVYHWFQNRRARSKRKQPPTTTITSSQADDAAVTTTEERGRCGDDSGGFESYEHILFPSPDLGIEHLLNRDKFID.

A DNA-binding region (homeobox; WUS-type) is located at residues 75-139 (STRPRWTPTT…NRRARSKRKQ (65 aa)). The disordered stretch occupies residues 132 to 168 (RARSKRKQPPTTTITSSQADDAAVTTTEERGRCGDDS). Residues 140 to 150 (PPTTTITSSQA) show a composition bias toward polar residues.

This sequence belongs to the WUS homeobox family.

Its subcellular location is the nucleus. Its function is as follows. Potential transcription factor that plays a central role during developmental processes. This is Putative WUSCHEL-related homeobox 10 (WOX10) from Arabidopsis thaliana (Mouse-ear cress).